Here is a 283-residue protein sequence, read N- to C-terminus: UPF0276 protein Nmul_A2550 (283 aa).

The protein belongs to the UPF0276 family.

In Nitrosospira multiformis (strain ATCC 25196 / NCIMB 11849 / C 71), this protein is UPF0276 protein Nmul_A2550.